The sequence spans 717 residues: Ribosomal RNA large subunit methyltransferase K/L (717 aa).

The 112-residue stretch at D44–L155 folds into the THUMP domain.

This sequence belongs to the methyltransferase superfamily. RlmKL family.

The protein localises to the cytoplasm. It catalyses the reaction guanosine(2445) in 23S rRNA + S-adenosyl-L-methionine = N(2)-methylguanosine(2445) in 23S rRNA + S-adenosyl-L-homocysteine + H(+). The catalysed reaction is guanosine(2069) in 23S rRNA + S-adenosyl-L-methionine = N(2)-methylguanosine(2069) in 23S rRNA + S-adenosyl-L-homocysteine + H(+). In terms of biological role, specifically methylates the guanine in position 2445 (m2G2445) and the guanine in position 2069 (m7G2069) of 23S rRNA. In Francisella tularensis subsp. tularensis (strain SCHU S4 / Schu 4), this protein is Ribosomal RNA large subunit methyltransferase K/L.